The chain runs to 415 residues: UDP-N-acetylmuramoylalanine--D-glutamate ligase (415 aa).

91–97 contributes to the ATP binding site; it reads GTDGKST.

The protein belongs to the MurCDEF family.

The protein localises to the cytoplasm. The catalysed reaction is UDP-N-acetyl-alpha-D-muramoyl-L-alanine + D-glutamate + ATP = UDP-N-acetyl-alpha-D-muramoyl-L-alanyl-D-glutamate + ADP + phosphate + H(+). Its pathway is cell wall biogenesis; peptidoglycan biosynthesis. Cell wall formation. Catalyzes the addition of glutamate to the nucleotide precursor UDP-N-acetylmuramoyl-L-alanine (UMA). This is UDP-N-acetylmuramoylalanine--D-glutamate ligase from Aquifex aeolicus (strain VF5).